Reading from the N-terminus, the 808-residue chain is Genome polyprotein (808 aa).

The disordered stretch occupies residues 34 to 55 (TAEVGSHQPEPLKTSVDKPGSK). 2 consecutive short sequence motifs ((L)YPX(n)L motif) follow at residues 146–150 (YPHGL) and 179–184 (YPVWEL).

The protein belongs to the picornaviridae polyprotein family. Homopentamer. Homooligomer. In terms of assembly, interacts with capsid protein VP2. Interacts with capsid protein VP3. As to quaternary structure, interacts with capsid protein VP1. Interacts with capsid protein VP3. Interacts with capsid protein VP1. Interacts with capsid protein VP2. Specific enzymatic cleavages by viral protease in vivo yield a variety of precursors and mature proteins. Polyprotein processing intermediates are produced, such as P1-2A which is a functional precursor of the structural proteins, VP0 which is a VP4-VP2 precursor, VP1-2A precursor, 3ABC precursor which is a stable and catalytically active precursor of 3A, 3B and 3C proteins, 3AB and 3CD precursors. The assembly signal 2A is removed from VP1-2A by a host protease, possibly host Cathepsin L. This cleavage occurs over a region of 3 amino-acids probably generating VP1 proteins with heterogeneous C-termini. In terms of processing, during virion maturation, immature virions are rendered infectious following cleavage of VP0 into VP4 and VP2. This maturation seems to be an autocatalytic event triggered by the presence of RNA in the capsid and is followed by a conformational change of the particle. Post-translationally, the assembly signal 2A is removed from VP1-2A by a host protease, possibly host Cathepsin L in naked virions. This cleavage does not occur in enveloped virions. This cleavage occurs over a region of 3 amino-acids probably generating VP1 proteins with heterogeneous C-termini. Unlike other picornaviruses, does not seem to be myristoylated.

The protein localises to the virion. The protein resides in the host endosome. It is found in the host multivesicular body. Its function is as follows. Capsid proteins VP1, VP2, and VP3 form a closed capsid enclosing the viral positive strand RNA genome. All these proteins contain a beta-sheet structure called beta-barrel jelly roll. Together they form an icosahedral capsid (T=3) composed of 60 copies of each VP1, VP2, and VP3, with a diameter of approximately 300 Angstroms. VP1 is situated at the 12 fivefold axes, whereas VP2 and VP3 are located at the quasi-sixfold axes. The naked capsid interacts with the host receptor HAVCR1 to provide virion attachment to and probably entry into the target cell. Functionally, VP0 precursor is a component of the immature procapsids. Plays a role in the assembly of the 12 pentamers into an icosahedral structure. Has not been detected in mature virions, supposedly owing to its small size. In terms of biological role, precursor component of immature procapsids that corresponds to an extended form of the structural protein VP1. After maturation, possibly by the host Cathepsin L, the assembly signal 2A is cleaved to give rise to the mature VP1 protein. This Human hepatitis A virus genotype IIIA (isolate GA76) (HHAV) protein is Genome polyprotein.